The primary structure comprises 164 residues: UPF0304 protein YfbU (164 aa).

Belongs to the UPF0304 family.

The polypeptide is UPF0304 protein YfbU (Salmonella enteritidis PT4 (strain P125109)).